The chain runs to 394 residues: 1-deoxy-D-xylulose 5-phosphate reductoisomerase (394 aa).

Thr-14, Gly-15, Ser-16, Ile-17, Gly-40, Asn-43, and Asn-130 together coordinate NADPH. A 1-deoxy-D-xylulose 5-phosphate-binding site is contributed by Lys-131. Glu-132 is a binding site for NADPH. Position 154 (Asp-154) interacts with Mn(2+). 1-deoxy-D-xylulose 5-phosphate-binding residues include Ser-155, Glu-156, Ser-180, and His-203. A Mn(2+)-binding site is contributed by Glu-156. Gly-209 serves as a coordination point for NADPH. Ser-216, Asn-221, Lys-222, and Glu-225 together coordinate 1-deoxy-D-xylulose 5-phosphate. Glu-225 contacts Mn(2+).

This sequence belongs to the DXR family. Mg(2+) serves as cofactor. Requires Mn(2+) as cofactor.

The catalysed reaction is 2-C-methyl-D-erythritol 4-phosphate + NADP(+) = 1-deoxy-D-xylulose 5-phosphate + NADPH + H(+). The protein operates within isoprenoid biosynthesis; isopentenyl diphosphate biosynthesis via DXP pathway; isopentenyl diphosphate from 1-deoxy-D-xylulose 5-phosphate: step 1/6. Its function is as follows. Catalyzes the NADPH-dependent rearrangement and reduction of 1-deoxy-D-xylulose-5-phosphate (DXP) to 2-C-methyl-D-erythritol 4-phosphate (MEP). The polypeptide is 1-deoxy-D-xylulose 5-phosphate reductoisomerase (Corynebacterium efficiens (strain DSM 44549 / YS-314 / AJ 12310 / JCM 11189 / NBRC 100395)).